Here is a 129-residue protein sequence, read N- to C-terminus: Transcription factor bHLH138 (129 aa).

Positions 1–18 (MERYTKKNERFKAEEGKG) are enriched in basic and acidic residues. The segment at 1 to 24 (MERYTKKNERFKAEEGKGSKKSRT) is disordered. The 50-residue stretch at 19–68 (SKKSRTFLTERERRALFNDRFFDLKNLIPNPTKGGEASIVQDGIVYINEL) folds into the bHLH domain.

Belongs to the bHLH protein family.

It localises to the nucleus. The chain is Transcription factor bHLH138 from Arabidopsis thaliana (Mouse-ear cress).